The primary structure comprises 473 residues: Ammonium transporter Rh type C (473 aa).

The Cytoplasmic portion of the chain corresponds to 1-9; the sequence is MLRNSNMRW. A helical membrane pass occupies residues 10–30; the sequence is RLPLICFVWEIAMIVLFGIFV. The Extracellular portion of the chain corresponds to 31 to 61; the sequence is RYNDEADPHWPIFMKHENITSDIENDFYFRY. Residue Asn-48 is glycosylated (N-linked (GlcNAc...) asparagine). A helical transmembrane segment spans residues 62–82; that stretch reads PSFQDVHVMIFVGFGFLMTFL. At 83-86 the chain is on the cytoplasmic side; that stretch reads QRYG. The helical transmembrane segment at 87–107 threads the bilayer; it reads FGSVAFNFLLAAFGIQWALLM. The Extracellular segment spans residues 108-125; sequence QGWFHTFVNGKILIGVES. The chain crosses the membrane as a helical span at residues 126–145; that stretch reads LINADFCVGSVCIAFGGVLG. Residues 146–151 lie on the Cytoplasmic side of the membrane; the sequence is KVSPVQ. A helical transmembrane segment spans residues 152–171; the sequence is IMLMTLFQVTLFAVNEWILL. At 172–179 the chain is on the extracellular side; the sequence is NKLHVIDA. A helical membrane pass occupies residues 180–200; sequence GGSMTIHTFGAYFGLTVAWIL. The Cytoplasmic portion of the chain corresponds to 201-219; the sequence is SRPKLKQNNDKEGSTYISD. A helical transmembrane segment spans residues 220–240; the sequence is LFSMIGTLFLWMYWPSFNSAI. Topologically, residues 241-251 are extracellular; it reads SYHGDAQHRAA. Residues 252-272 traverse the membrane as a helical segment; the sequence is INTYCSLAACVLTTVAISSVV. At 273–285 the chain is on the cytoplasmic side; sequence NKKGKLEMVHIQN. Residues 286–306 form a helical membrane-spanning segment; the sequence is ATLAGGVAVGTAAEMMLTPYG. A topological domain (extracellular) is located at residue Ser-307. A helical transmembrane segment spans residues 308–328; that stretch reads LIVGFICGIVSTLGFTYLSPI. Topologically, residues 329–343 are cytoplasmic; it reads LSNKLRLHDTCGIHN. A helical membrane pass occupies residues 344 to 364; it reads LHAIPGLIGGIVGAVTAACAT. Residues 365–396 are Extracellular-facing; that stretch reads EGVYTAEGLKKMFHFEGEYADRTPSIQGIYQA. The helical transmembrane segment at 397 to 417 threads the bilayer; that stretch reads AGIGVSLAFGIVGGTVVGCIL. At 418–473 the chain is on the cytoplasmic side; it reads KLPIWGDPSDENCFDDDVYWELREEDEEEHLGAANQYITHLPENFKLPDRTEISFK.

It belongs to the ammonium transporter (TC 2.A.49) family. Rh subfamily. In terms of assembly, homotrimer.

The protein localises to the apical cell membrane. Functionally, functions as an ammonia transporter. The protein is Ammonium transporter Rh type C (rhcg) of Xenopus laevis (African clawed frog).